A 153-amino-acid chain; its full sequence is 6,7-dimethyl-8-ribityllumazine synthase 1 (153 aa).

5-amino-6-(D-ribitylamino)uracil is bound by residues F16, 50 to 52, and 74 to 76; these read AYE and CVI. (2S)-2-hydroxy-3-oxobutyl phosphate is bound at residue 79–80; that stretch reads ET. The active-site Proton donor is H82. F107 contributes to the 5-amino-6-(D-ribitylamino)uracil binding site. R121 contributes to the (2S)-2-hydroxy-3-oxobutyl phosphate binding site.

It belongs to the DMRL synthase family.

The catalysed reaction is (2S)-2-hydroxy-3-oxobutyl phosphate + 5-amino-6-(D-ribitylamino)uracil = 6,7-dimethyl-8-(1-D-ribityl)lumazine + phosphate + 2 H2O + H(+). It functions in the pathway cofactor biosynthesis; riboflavin biosynthesis; riboflavin from 2-hydroxy-3-oxobutyl phosphate and 5-amino-6-(D-ribitylamino)uracil: step 1/2. Its function is as follows. Catalyzes the formation of 6,7-dimethyl-8-ribityllumazine by condensation of 5-amino-6-(D-ribitylamino)uracil with 3,4-dihydroxy-2-butanone 4-phosphate. This is the penultimate step in the biosynthesis of riboflavin. The sequence is that of 6,7-dimethyl-8-ribityllumazine synthase 1 from Caulobacter vibrioides (strain ATCC 19089 / CIP 103742 / CB 15) (Caulobacter crescentus).